The following is a 244-amino-acid chain: Uridylate kinase (244 aa).

17-20 (KLSG) is a binding site for ATP. UMP is bound at residue Gly59. Residues Gly60 and Arg64 each contribute to the ATP site. UMP-binding positions include Asp79 and 140-147 (TGNPFFTT). ATP-binding residues include Thr167, Tyr173, and Asp176.

The protein belongs to the UMP kinase family. As to quaternary structure, homohexamer.

The protein localises to the cytoplasm. The catalysed reaction is UMP + ATP = UDP + ADP. Its pathway is pyrimidine metabolism; CTP biosynthesis via de novo pathway; UDP from UMP (UMPK route): step 1/1. Inhibited by UTP. Its function is as follows. Catalyzes the reversible phosphorylation of UMP to UDP. The protein is Uridylate kinase of Hahella chejuensis (strain KCTC 2396).